The following is a 607-amino-acid chain: Elongation factor 4 (607 aa).

A tr-type G domain is found at 11–193 (SKIRNFSIIA…QIVEKVPAPT (183 aa)). GTP-binding positions include 23-28 (DHGKST) and 140-143 (NKID).

This sequence belongs to the TRAFAC class translation factor GTPase superfamily. Classic translation factor GTPase family. LepA subfamily.

It localises to the cell membrane. It catalyses the reaction GTP + H2O = GDP + phosphate + H(+). In terms of biological role, required for accurate and efficient protein synthesis under certain stress conditions. May act as a fidelity factor of the translation reaction, by catalyzing a one-codon backward translocation of tRNAs on improperly translocated ribosomes. Back-translocation proceeds from a post-translocation (POST) complex to a pre-translocation (PRE) complex, thus giving elongation factor G a second chance to translocate the tRNAs correctly. Binds to ribosomes in a GTP-dependent manner. This chain is Elongation factor 4, found in Bacillus cereus (strain Q1).